The sequence spans 245 residues: Adapter protein MecA (245 aa).

This sequence belongs to the MecA family. In terms of assembly, homodimer.

Its function is as follows. Enables the recognition and targeting of unfolded and aggregated proteins to the ClpC protease or to other proteins involved in proteolysis. The chain is Adapter protein MecA from Streptococcus pneumoniae serotype 4 (strain ATCC BAA-334 / TIGR4).